The sequence spans 826 residues: Hyaluronate lyase HylA (826 aa).

The segment at residues 1-36 is a signal peptide (tat-type signal); it reads MFDIPYQVPSRRTFLSLSALSAIAIAASPEMPDAFA. Active-site residues include H276, Y285, and R339. The disordered stretch occupies residues 800-826; that stretch reads LSPALPKPTKPSLRASSYPLGLPHTSS.

Belongs to the polysaccharide lyase 8 family. Post-translationally, predicted to be exported by the Tat system. The position of the signal peptide cleavage has not been experimentally proven.

It is found in the secreted. It catalyses the reaction [hyaluronan](n) = n 3-(4-deoxy-beta-D-gluc-4-enuronosyl)-N-acetyl-D-glucosamine + H2O. Its function is as follows. Degrades hyaluronic acid (HA) into large-sized HA oligosaccharides, including tetrasaccharide HA (HA-4), hexasaccharide HA (HA-6) and higher molecular weight HA, and to a lesser extent into HA disaccharides (HA-2). Involved in the pathogenesis of acne. HA degradation products induce secretion of proinflammatory cytokines (IL-6, IL-8 and TNF-alpha) from human HaCaT keratinocyte cell line and from mouse bone marrow derived macrophages (BMDMs). Produced HA fragments also direct robust TLR2-dependent inflammation in the mouse model of acne. This Cutibacterium acnes (Propionibacterium acnes) protein is Hyaluronate lyase HylA.